The sequence spans 469 residues: Sorting and assembly machinery component 50 homolog (469 aa).

The tract at residues 1–20 is disordered; the sequence is MGTVHARSLEPLPSSGPDFG. Positions 45 to 125 constitute a POTRA domain; sequence VVVQHVHFDG…LDVTFEVTEL (81 aa). N6-methyllysine is present on K255.

The protein belongs to the SAM50/omp85 family. In terms of assembly, associates with the mitochondrial contact site and cristae organizing system (MICOS) complex, composed of at least MICOS10/MIC10, CHCHD3/MIC19, CHCHD6/MIC25, APOOL/MIC27, IMMT/MIC60, APOO/MIC23/MIC26 and QIL1/MIC13. This complex was also known under the names MINOS or MitOS complex. The MICOS complex associates with mitochondrial outer membrane proteins SAMM50, MTX1 and MTX2 (together described as components of the mitochondrial outer membrane sorting assembly machinery (SAM) complex) and DNAJC11, mitochondrial inner membrane protein TMEM11 and with HSPA9. The MICOS and SAM complexes together with DNAJC11 are part of a large protein complex spanning both membranes termed the mitochondrial intermembrane space bridging (MIB) complex. Interacts with CHCHD3/MIC19. Interacts with ARMC1. As to quaternary structure, (Microbial infection) Interacts with parasite T.gondii RH strain MAF1b1; the interaction is probably indirect and results in the disruption of the MIB complex and the formation of SPOTs (structures positive for outer mitochondrial membrane (OMM)), a cellular response to OMM stress, which leads to the constitutive shedding of OMM vesicles.

The protein localises to the mitochondrion outer membrane. It is found in the cytoplasm. Its subcellular location is the mitochondrion. In terms of biological role, plays a crucial role in the maintenance of the structure of mitochondrial cristae and the proper assembly of the mitochondrial respiratory chain complexes. Required for the assembly of TOMM40 into the TOM complex. In Homo sapiens (Human), this protein is Sorting and assembly machinery component 50 homolog (SAMM50).